The chain runs to 273 residues: Dermonecrotic toxin LdSicTox-alphaIB3ai (273 aa).

Histidine 5 is an active-site residue. Glutamate 25 and aspartate 27 together coordinate Mg(2+). The active-site Nucleophile is the histidine 41. 2 disulfides stabilise this stretch: cysteine 45/cysteine 51 and cysteine 47/cysteine 190. Aspartate 85 serves as a coordination point for Mg(2+).

The protein belongs to the arthropod phospholipase D family. Class II subfamily. It depends on Mg(2+) as a cofactor. Expressed by the venom gland.

The protein localises to the secreted. It carries out the reaction an N-(acyl)-sphingosylphosphocholine = an N-(acyl)-sphingosyl-1,3-cyclic phosphate + choline. The enzyme catalyses an N-(acyl)-sphingosylphosphoethanolamine = an N-(acyl)-sphingosyl-1,3-cyclic phosphate + ethanolamine. It catalyses the reaction a 1-acyl-sn-glycero-3-phosphocholine = a 1-acyl-sn-glycero-2,3-cyclic phosphate + choline. The catalysed reaction is a 1-acyl-sn-glycero-3-phosphoethanolamine = a 1-acyl-sn-glycero-2,3-cyclic phosphate + ethanolamine. In terms of biological role, dermonecrotic toxins cleave the phosphodiester linkage between the phosphate and headgroup of certain phospholipids (sphingolipid and lysolipid substrates), forming an alcohol (often choline) and a cyclic phosphate. This toxin acts on sphingomyelin (SM). It may also act on ceramide phosphoethanolamine (CPE), lysophosphatidylcholine (LPC) and lysophosphatidylethanolamine (LPE), but not on lysophosphatidylserine (LPS), and lysophosphatidylglycerol (LPG). It acts by transphosphatidylation, releasing exclusively cyclic phosphate products as second products. Induces dermonecrosis, hemolysis, increased vascular permeability, edema, inflammatory response, and platelet aggregation. The protein is Dermonecrotic toxin LdSicTox-alphaIB3ai of Loxosceles deserta (Desert recluse spider).